A 278-amino-acid chain; its full sequence is Tumor necrosis factor ligand superfamily member 6 (278 aa).

Residues 1–77 lie on the Cytoplasmic side of the membrane; sequence MQQPVNYPCP…SPLKKKDNIE (77 aa). The segment at 26-68 is disordered; sequence PGSVFSCPSSGPRGPGQRRPPPPPPPPSPLPPPSQPPPLPPLS. Positions 33–42 are enriched in low complexity; it reads PSSGPRGPGQ. A compositionally biased stretch (pro residues) spans 43–68; that stretch reads RRPPPPPPPPSPLPPPSQPPPLPPLS. Residues 78–99 traverse the membrane as a helical; Signal-anchor for type II membrane protein segment; sequence LWLPVIFFMVLVALVGMGLGMY. Residues 100-278 lie on the Extracellular side of the membrane; that stretch reads QLFHLQKELA…SKTFFGLYKL (179 aa). N116 carries N-linked (GlcNAc...) asparagine glycosylation. The segment covering 125–135 has biased composition (polar residues); sequence EKQIANPSTPS. Residues 125-147 form a disordered region; the sequence is EKQIANPSTPSETKKPRSVAHLT. The region spanning 142–278 is the THD domain; that stretch reads SVAHLTGNPR…SKTFFGLYKL (137 aa). C199 and C230 form a disulfide bridge. N247 and N257 each carry an N-linked (GlcNAc...) asparagine glycan.

This sequence belongs to the tumor necrosis factor family. Homotrimer. Interacts with ARHGAP9, BAIAP2L1, BTK, CACNB3, CACNB4, CRK, DLG2, DNMBP, DOCK4, EPS8L3, FGR, FYB1, FYN, HCK, ITK, ITSN2, KALRN, LYN, MACC1, MIA, MPP4, MYO15A, NCF1, NCK1, NCK2, NCKIPSD, OSTF1, PIK3R1, PSTPIP1, RIMBP3C, SAMSN1, SH3GL3, SH3PXD2B, SH3PXD2A, SH3RF2, SKAP2, SNX33, SNX9, SORBS3, SPTA1, SRC, SRGAP1, SRGAP2, SRGAP3, TEC, TJP3 and YES1. In terms of processing, the soluble form derives from the membrane form by proteolytic processing. The membrane-bound form undergoes two successive intramembrane proteolytic cleavages. The first one is processed by ADAM10 producing an N-terminal fragment, which lacks the receptor-binding extracellular domain. This ADAM10-processed FasL (FasL APL) remnant form is still membrane anchored and further processed by SPPL2A that liberates the FasL intracellular domain (FasL ICD). FasL shedding by ADAM10 is a prerequisite for subsequent intramembrane cleavage by SPPL2A in T-cells. Post-translationally, phosphorylated by FGR on tyrosine residues; this is required for ubiquitination and subsequent internalization. N-glycosylated. In terms of processing, monoubiquitinated. Expressed in activated splenocytes and thymocytes. Moderate or weak expression found in small intestines, kidney and lung.

It localises to the cell membrane. The protein localises to the cytoplasmic vesicle lumen. The protein resides in the lysosome lumen. Its subcellular location is the secreted. It is found in the nucleus. Functionally, cytokine that binds to TNFRSF6/FAS, a receptor that transduces the apoptotic signal into cells. Involved in cytotoxic T-cell-mediated apoptosis, natural killer cell-mediated apoptosis and in T-cell development. Initiates fratricidal/suicidal activation-induced cell death (AICD) in antigen-activated T-cells contributing to the termination of immune responses. TNFRSF6/FAS-mediated apoptosis also has a role in the induction of peripheral tolerance. Binds to TNFRSF6B/DcR3, a decoy receptor that blocks apoptosis. Induces FAS-mediated activation of NF-kappa-B, initiating non-apoptotic signaling pathways. Can induce apoptosis but does not appear to be essential for this process. Its function is as follows. Cytoplasmic form induces gene transcription inhibition. The chain is Tumor necrosis factor ligand superfamily member 6 (Faslg) from Rattus norvegicus (Rat).